A 225-amino-acid chain; its full sequence is UPF0758 protein NMC1174 (225 aa).

Positions 102-224 (VLSDPDTVAD…VRSFRQLGLM (123 aa)) constitute an MPN domain. His173, His175, and Asp186 together coordinate Zn(2+). The short motif at 173–186 (HNHPGGSPEPSQED) is the JAMM motif element.

The protein belongs to the UPF0758 family.

The chain is UPF0758 protein NMC1174 from Neisseria meningitidis serogroup C / serotype 2a (strain ATCC 700532 / DSM 15464 / FAM18).